Here is a 213-residue protein sequence, read N- to C-terminus: Large ribosomal subunit protein uL3 (213 aa).

Residue Gln-151 is modified to N5-methylglutamine.

It belongs to the universal ribosomal protein uL3 family. As to quaternary structure, part of the 50S ribosomal subunit. Forms a cluster with proteins L14 and L19. Methylated by PrmB.

In terms of biological role, one of the primary rRNA binding proteins, it binds directly near the 3'-end of the 23S rRNA, where it nucleates assembly of the 50S subunit. The chain is Large ribosomal subunit protein uL3 from Rhizobium leguminosarum bv. trifolii (strain WSM2304).